An 850-amino-acid polypeptide reads, in one-letter code: Bifunctional uridylyltransferase/uridylyl-removing enzyme (850 aa).

Positions 1-317 (MSARPFADLR…LFPVVAPPLP (317 aa)) are uridylyltransferase. The tract at residues 318 to 673 (IDDDFQLRAG…ARLSPAGEGI (356 aa)) is uridylyl-removing. The region spanning 436 to 558 (VDEHILTVLR…VGDTRRLDAL (123 aa)) is the HD domain. ACT domains are found at residues 674–755 (QVMV…AVQP) and 783–850 (VLSI…GVLG).

This sequence belongs to the GlnD family. The cofactor is Mg(2+).

It carries out the reaction [protein-PII]-L-tyrosine + UTP = [protein-PII]-uridylyl-L-tyrosine + diphosphate. The catalysed reaction is [protein-PII]-uridylyl-L-tyrosine + H2O = [protein-PII]-L-tyrosine + UMP + H(+). Uridylyltransferase (UTase) activity is inhibited by glutamine, while glutamine activates uridylyl-removing (UR) activity. Functionally, modifies, by uridylylation and deuridylylation, the PII regulatory proteins (GlnB and homologs), in response to the nitrogen status of the cell that GlnD senses through the glutamine level. Under low glutamine levels, catalyzes the conversion of the PII proteins and UTP to PII-UMP and PPi, while under higher glutamine levels, GlnD hydrolyzes PII-UMP to PII and UMP (deuridylylation). Thus, controls uridylylation state and activity of the PII proteins, and plays an important role in the regulation of nitrogen assimilation and metabolism. The sequence is that of Bifunctional uridylyltransferase/uridylyl-removing enzyme from Thiobacillus denitrificans (strain ATCC 25259 / T1).